A 355-amino-acid chain; its full sequence is Phosphoribosylformylglycinamidine cyclo-ligase (355 aa).

This sequence belongs to the AIR synthase family.

The protein resides in the cytoplasm. It catalyses the reaction 2-formamido-N(1)-(5-O-phospho-beta-D-ribosyl)acetamidine + ATP = 5-amino-1-(5-phospho-beta-D-ribosyl)imidazole + ADP + phosphate + H(+). It participates in purine metabolism; IMP biosynthesis via de novo pathway; 5-amino-1-(5-phospho-D-ribosyl)imidazole from N(2)-formyl-N(1)-(5-phospho-D-ribosyl)glycinamide: step 2/2. This chain is Phosphoribosylformylglycinamidine cyclo-ligase, found in Paraburkholderia xenovorans (strain LB400).